A 441-amino-acid chain; its full sequence is Endoglucanase E-2 (441 aa).

The segment at residues 1–31 (MSPRPLRALLGAAAAALVSAAALAFPSQAAA) is a signal peptide (tat-type signal). The segment at 32 to 320 (NDSPFYVNPN…YEMAIAAGGT (289 aa)) is catalytic. Residue aspartate 110 is part of the active site. 2 disulfides stabilise this stretch: cysteine 111–cysteine 156 and cysteine 263–cysteine 298. Aspartate 148 acts as the Proton donor in catalysis. Catalysis depends on aspartate 296, which acts as the Nucleophile. Positions 317 to 343 (AGGTNPNPNPNPTPTPTPTPTPPPGSS) are disordered. A linker region spans residues 321 to 340 (NPNPNPNPTPTPTPTPTPPP). Residues 323–341 (NPNPNPTPTPTPTPTPPPG) are compositionally biased toward pro residues. Residues 339–441 (PPGSSGACTA…SVPTLTCAAS (103 aa)) form the CBM2 domain. Cysteines 346 and 438 form a disulfide.

The protein belongs to the glycosyl hydrolase 6 (cellulase B) family. Homodimer. Post-translationally, predicted to be exported by the Tat system. The position of the signal peptide cleavage has been experimentally proven.

It catalyses the reaction Endohydrolysis of (1-&gt;4)-beta-D-glucosidic linkages in cellulose, lichenin and cereal beta-D-glucans.. It functions in the pathway glycan metabolism; cellulose degradation. The sequence is that of Endoglucanase E-2 (celB) from Thermobifida fusca (Thermomonospora fusca).